We begin with the raw amino-acid sequence, 162 residues long: Cyclic pyranopterin monophosphate synthase (162 aa).

Residues 75 to 77 (LCH) and 113 to 114 (ME) each bind substrate. Asp-128 is an active-site residue.

The protein belongs to the MoaC family. In terms of assembly, homohexamer; trimer of dimers.

The catalysed reaction is (8S)-3',8-cyclo-7,8-dihydroguanosine 5'-triphosphate = cyclic pyranopterin phosphate + diphosphate. Its pathway is cofactor biosynthesis; molybdopterin biosynthesis. Catalyzes the conversion of (8S)-3',8-cyclo-7,8-dihydroguanosine 5'-triphosphate to cyclic pyranopterin monophosphate (cPMP). The polypeptide is Cyclic pyranopterin monophosphate synthase (Burkholderia ambifaria (strain MC40-6)).